The sequence spans 970 residues: Villin-3 (970 aa).

6 Gelsolin-like repeats span residues 31–111 (AVPV…ERFL), 151–219 (TVHV…EDGK), 273–339 (VLTR…TVIF), 416–484 (KFYS…PAEF), 536–576 (AIQV…QELA), and 643–714 (NFTQ…PQFF). The disordered stretch occupies residues 741–908 (DGVKPKLDKP…EGQPENEEGL (168 aa)). Residues 755–778 (TTSSSHTGRSSVPEKSQRSRSMSF) are compositionally biased toward polar residues. Residues 833–842 (AASIAAISAS) show a composition bias toward low complexity. Residues 878-893 (KDSTPSKDSPTVTPTI) are compositionally biased toward polar residues. The 66-residue stretch at 905–970 (EEGLPVYPYE…NRLKIALQLF (66 aa)) folds into the HP domain.

The protein belongs to the villin/gelsolin family. In terms of tissue distribution, expressed in roots, young leaves, and inflorescences, mostly in the vasculature of roots, leaves, and filaments of the anthers and in epidermal cells of the elongation zone and root hairs. Also detected in guard cells.

The protein resides in the cytoplasm. It is found in the cytoskeleton. Functionally, ca(2+)-regulated actin-binding protein. Binds actin microfilaments (MFs). Involved in actin filament bundling, severing and capping. Caps the barbed end of actin filaments and is able to sever them in a calcium-dependent manner. MF severing is promoted by VLN1. The sequence is that of Villin-3 from Oryza sativa subsp. japonica (Rice).